We begin with the raw amino-acid sequence, 440 residues long: Homocitrate synthase, mitochondrial (440 aa).

The segment covering 1–23 (MSENNEFQSVTESTTAPTTSNPY) has biased composition (polar residues). The tract at residues 1–27 (MSENNEFQSVTESTTAPTTSNPYGPNP) is disordered. Residues 37–290 (FQLIDSTLRE…RSKYKLHKIR (254 aa)) form the Pyruvate carboxyltransferase domain. Arg-45 serves as a coordination point for 2-oxoglutarate. Glu-46 provides a ligand contact to Mg(2+). 2-oxoglutarate is bound by residues His-105, Arg-165, and Thr-199. Residues His-226 and His-228 each contribute to the Mg(2+) site. His-323 serves as the catalytic Proton acceptor. At Ser-399 the chain carries Phosphoserine. Position 410 is a phosphothreonine (Thr-410).

It belongs to the alpha-IPM synthase/homocitrate synthase family. Homocitrate synthase LYS20/LYS21 subfamily. Mg(2+) is required as a cofactor. The cofactor is Mn(2+).

It localises to the mitochondrion. The enzyme catalyses acetyl-CoA + 2-oxoglutarate + H2O = (2R)-homocitrate + CoA + H(+). It participates in amino-acid biosynthesis; L-lysine biosynthesis via AAA pathway; L-alpha-aminoadipate from 2-oxoglutarate: step 1/5. In terms of biological role, catalyzes the aldol-type condensation of 2-oxoglutarate with acetyl-CoA to yield homocitrate. Carries out the first step of the alpha-aminoadipate (AAA) lysine biosynthesis pathway. This is Homocitrate synthase, mitochondrial (LYS21) from Saccharomyces cerevisiae (strain ATCC 204508 / S288c) (Baker's yeast).